A 94-amino-acid polypeptide reads, in one-letter code: Neutrophil defensin 6 (94 aa).

The signal sequence occupies residues 1-19 (MRTIAILAAILLFALLAQA). A propeptide spanning residues 20-61 (KSLQETADEAATQEQPGEDDQDLAVSFEENGLSTLRASGSQA) is cleaved from the precursor. Intrachain disulfides connect Cys-65–Cys-93, Cys-67–Cys-82, and Cys-72–Cys-92.

It belongs to the alpha-defensin family.

The protein localises to the secreted. Defensins 6 and 7 have bacteriostatic activity against Gram-positive bacteria S.aureus and L.monocytogenes and Gram-negative bacterium E.coli and antifungal activity against C.neoformans. Defensin 7 has microbicidial activity against Gram-positive bacteria S.aureus and L.monocytogenes. This Macaca mulatta (Rhesus macaque) protein is Neutrophil defensin 6.